Here is a 264-residue protein sequence, read N- to C-terminus: tRNA pseudouridine synthase A (264 aa).

The active-site Nucleophile is the D51. Y109 provides a ligand contact to substrate.

This sequence belongs to the tRNA pseudouridine synthase TruA family. As to quaternary structure, homodimer.

The catalysed reaction is uridine(38/39/40) in tRNA = pseudouridine(38/39/40) in tRNA. In terms of biological role, formation of pseudouridine at positions 38, 39 and 40 in the anticodon stem and loop of transfer RNAs. This is tRNA pseudouridine synthase A from Pseudoalteromonas translucida (strain TAC 125).